The primary structure comprises 176 residues: Small ribosomal subunit protein bS6 (176 aa).

Residues Asp-97–Glu-176 are disordered. A compositionally biased stretch (low complexity) spans Ala-140–Val-160. The span at Asp-161–Glu-176 shows a compositional bias: acidic residues.

The protein belongs to the bacterial ribosomal protein bS6 family.

Functionally, binds together with bS18 to 16S ribosomal RNA. The polypeptide is Small ribosomal subunit protein bS6 (Gloeothece citriformis (strain PCC 7424) (Cyanothece sp. (strain PCC 7424))).